The following is a 201-amino-acid chain: ATP-dependent Clp protease proteolytic subunit (201 aa).

The active-site Nucleophile is Ser101. The active site involves His126.

Belongs to the peptidase S14 family. In terms of assembly, fourteen ClpP subunits assemble into 2 heptameric rings which stack back to back to give a disk-like structure with a central cavity, resembling the structure of eukaryotic proteasomes.

The protein resides in the cytoplasm. It carries out the reaction Hydrolysis of proteins to small peptides in the presence of ATP and magnesium. alpha-casein is the usual test substrate. In the absence of ATP, only oligopeptides shorter than five residues are hydrolyzed (such as succinyl-Leu-Tyr-|-NHMec, and Leu-Tyr-Leu-|-Tyr-Trp, in which cleavage of the -Tyr-|-Leu- and -Tyr-|-Trp bonds also occurs).. Cleaves peptides in various proteins in a process that requires ATP hydrolysis. Has a chymotrypsin-like activity. Plays a major role in the degradation of misfolded proteins. The protein is ATP-dependent Clp protease proteolytic subunit of Francisella philomiragia subsp. philomiragia (strain ATCC 25017 / CCUG 19701 / FSC 153 / O#319-036).